Consider the following 155-residue polypeptide: RNA pyrophosphohydrolase (155 aa).

The 143-residue stretch at 5 to 147 (KYRPNVAAII…KRQVYRQVIA (143 aa)) folds into the Nudix hydrolase domain. The Nudix box motif lies at 42 to 63 (GGIDEGETPLEALYRELLEEIG).

It belongs to the Nudix hydrolase family. RppH subfamily. Requires a divalent metal cation as cofactor.

Accelerates the degradation of transcripts by removing pyrophosphate from the 5'-end of triphosphorylated RNA, leading to a more labile monophosphorylated state that can stimulate subsequent ribonuclease cleavage. This is RNA pyrophosphohydrolase from Helicobacter pylori (strain P12).